Here is a 44-residue protein sequence, read N- to C-terminus: DNA-directed RNA polymerase subunit Rpo12 (44 aa).

The Zn(2+) site is built by C8, C22, and C25.

Belongs to the archaeal Rpo12/eukaryotic RPC10 RNA polymerase subunit family. In terms of assembly, part of the RNA polymerase complex. Requires Zn(2+) as cofactor.

The protein localises to the cytoplasm. It catalyses the reaction RNA(n) + a ribonucleoside 5'-triphosphate = RNA(n+1) + diphosphate. DNA-dependent RNA polymerase (RNAP) catalyzes the transcription of DNA into RNA using the four ribonucleoside triphosphates as substrates. The chain is DNA-directed RNA polymerase subunit Rpo12 from Haloquadratum walsbyi (strain DSM 16790 / HBSQ001).